The following is a 113-amino-acid chain: Iron-sulfur cluster insertion protein ErpA (113 aa).

Iron-sulfur cluster is bound by residues Cys-41, Cys-105, and Cys-107.

This sequence belongs to the HesB/IscA family. As to quaternary structure, homodimer. The cofactor is iron-sulfur cluster.

In terms of biological role, required for insertion of 4Fe-4S clusters for at least IspG. The chain is Iron-sulfur cluster insertion protein ErpA from Aliivibrio fischeri (strain ATCC 700601 / ES114) (Vibrio fischeri).